Consider the following 160-residue polypeptide: Large ribosomal subunit protein uL22c (160 aa).

The protein belongs to the universal ribosomal protein uL22 family. In terms of assembly, part of the 50S ribosomal subunit.

The protein localises to the plastid. It localises to the chloroplast. Functionally, this protein binds specifically to 23S rRNA. In terms of biological role, the globular domain of the protein is located near the polypeptide exit tunnel on the outside of the subunit, while an extended beta-hairpin is found that lines the wall of the exit tunnel in the center of the 70S ribosome. The chain is Large ribosomal subunit protein uL22c (rpl22) from Lepidium virginicum (Virginia pepperweed).